A 375-amino-acid polypeptide reads, in one-letter code: DNA replication and repair protein RecF (375 aa).

30-37 (GKNAQGKT) is an ATP binding site.

The protein belongs to the RecF family.

Its subcellular location is the cytoplasm. The RecF protein is involved in DNA metabolism; it is required for DNA replication and normal SOS inducibility. RecF binds preferentially to single-stranded, linear DNA. It also seems to bind ATP. The chain is DNA replication and repair protein RecF from Lactobacillus acidophilus (strain ATCC 700396 / NCK56 / N2 / NCFM).